A 373-amino-acid polypeptide reads, in one-letter code: Transcription factor NF-E2 45 kDa subunit (373 aa).

Disordered regions lie at residues 1–22 (MPPC…GELG) and 40–60 (LNVP…PGPL). A required for interaction with MAPK8 region spans residues 1-83 (MPPCPPQPNR…AGFTLPPPPY (83 aa)). The segment at 1–206 (MPPCPPQPNR…PPTETPLVLE (206 aa)) is transactivation domain. 2 short sequence motifs (PXY motif) span residues 61–65 (PPPTY) and 79–83 (PPPPY). A disordered region spans residues 131-163 (LPVGQPKPQEDPESDSGLSLNYSDAESLELEGT). Position 157 is a phosphoserine; by MAPK8 (Ser-157). The residue at position 170 (Ser-170) is a Phosphoserine; by PKA. Positions 206–225 (ESSSGPVRAKPAVRGEAGSR) are disordered. The 64-residue stretch at 266 to 329 (LVRDIRRRGK…EVMRQQLTEL (64 aa)) folds into the bZIP domain. Residues 268–287 (RDIRRRGKNKVAAQNCRKRK) are basic motif. The leucine-zipper stretch occupies residues 291 to 298 (IVQLEREL). Lys-368 participates in a covalent cross-link: Glycyl lysine isopeptide (Lys-Gly) (interchain with G-Cter in SUMO); alternate. A Glycyl lysine isopeptide (Lys-Gly) (interchain with G-Cter in SUMO1); alternate cross-link involves residue Lys-368.

Belongs to the bZIP family. CNC subfamily. In terms of assembly, homodimer; can bind DNA as a homodimer. Erythroid transcription activator nuclear factor erythroid-derived 2 (NF-E2), composed of a heterodimer of NFE2 and MAFK, possesses transactivation activity on beta-globin. Also forms high affinity heterodimer with MAFG; the interaction promotes erythropoiesis. Interacts (via the PXY motif 1) with ITCH (via the WW 1 domain); the interaction promotes 'Lys63'-linked ubiquitination of NFE2, translocates it to the cytoplasm and inhibits its transactivation activity. Interacts with KMT2D/MLL2; the interaction promotes transactivation of the beta-globin locus. Interacts with MAPK8 (phosphorylated form); the interaction leads to phosphorylation of NFE2 in undifferentiated cells. Post-translationally, phosphorylated on serine residues. In undifferentiated erythrocytes, phosphorylated by MAPK8 which then leads to ubiquitination and protein degradation. Sumoylated. Sumoylation is required for translocation to nuclear bodies PODs, anchoring to the gene loci, and transactivation of the beta-globin gene. In terms of processing, ubiquitinated mainly by 'Lys63'-linked ubiquitin. Polyubiquitination with 'Lys63'-linked ubiquitin by ITCH retains NFE2 in the cytoplasm preventing its transactivation activity. In undifferentiated erythrocyte, ubiquitinated after MAPK8-mediatd phosphorylation leading to protein degradation.

The protein localises to the nucleus. The protein resides in the PML body. It is found in the cytoplasm. Its function is as follows. Component of the NF-E2 complex essential for regulating erythroid and megakaryocytic maturation and differentiation. Binds to the hypersensitive site 2 (HS2) of the beta-globin control region (LCR). This subunit (NFE2) recognizes the TCAT/C sequence of the AP-1-like core palindrome present in a number of erythroid and megakaryocytic gene promoters. Requires MAFK or other small MAF proteins for binding to the NF-E2 motif. May play a role in all aspects of hemoglobin production from globin and heme synthesis to procurement of iron. The sequence is that of Transcription factor NF-E2 45 kDa subunit (Nfe2) from Rattus norvegicus (Rat).